Here is a 461-residue protein sequence, read N- to C-terminus: Propanal dehydrogenase (CoA-propanoylating) (461 aa).

A targets protein to the BMC region spans residues 1-18 (MNTSELETLIRNILSEQL).

It belongs to the EutE/PduP family. Interacts with PduK, probably with its BMC-containing N-terminus. Interacts with shell proteins PduA and PduJ, interacts with PduQ.

The protein resides in the bacterial microcompartment. It catalyses the reaction propanal + NAD(+) + CoA = propanoyl-CoA + NADH + H(+). The protein operates within polyol metabolism; 1,2-propanediol degradation. Its function is as follows. A CoA-acylating aldehyde dehydrogenase required for optimal 1,2-propanediol (1,2-PD) degradation. Optimizes growth in the bacterial microcompartment (BMC) dedicated to 1,2-PD degradation by minimizing propionaldehyde toxicity. NAD(+) and NADH are regenerated internally within the Pdu BMC by the PduP and PduQ enzymes, which reduce NAD(+) and oxidize NADH respectively, although there must also be cofactor transport across the BMC. Directly targeted to the BMC. Functionally, expression of a cosmid containing the full 21-gene pdu operon in E.coli allows E.coli to grow on 1,2-propanediol (1,2-PD) with the appearance of bacterial microcompartments (BMC) in its cytoplasm. The 1,2-PD-specific bacterial microcompartment (BMC) concentrates low levels of 1,2-PD catabolic enzymes, concentrates volatile reaction intermediates thus enhancing pathway flux and keeps the level of toxic, mutagenic propionaldehyde low. The sequence is that of Propanal dehydrogenase (CoA-propanoylating) from Citrobacter freundii.